Consider the following 360-residue polypeptide: RNA demethylase ALKBH5 (360 aa).

The tract at residues 1–53 is disordered; it reads MSATYTDLREKLQSLNRDSPKEVRKRKQPASDTEEEDEAGSEPEAEEEEARKV. The span at 7–22 shows a compositional bias: basic and acidic residues; sequence DLREKLQSLNRDSPKE. Positions 32-48 are enriched in acidic residues; the sequence is DTEEEDEAGSEPEAEEE. Tyr-107 is a catalytic residue. 2-oxoglutarate contacts are provided by Asn-161, Tyr-163, His-172, His-234, and Arg-245. The cysteines at positions 198 and 235 are disulfide-linked. Residues 261 to 360 form a disordered region; that stretch reads EMKSLSSSYQ…PVRKVKMRRH (100 aa). Over residues 264 to 280 the composition is skewed to polar residues; that stretch reads SLSSSYQPERLQGSNRQ. The span at 281-290 shows a compositional bias: basic residues; it reads HILKPKRSHR. 2 stretches are compositionally biased toward basic and acidic residues: residues 291-312 and 330-340; these read KADP…ENRR and YWRRSHDHVDT.

The protein belongs to the alkB family. As to quaternary structure, monomer. It depends on Fe(2+) as a cofactor.

It is found in the nucleus speckle. The enzyme catalyses an N(6)-methyladenosine in mRNA + 2-oxoglutarate + O2 = an adenosine in mRNA + formaldehyde + succinate + CO2. Dioxygenase that specifically demethylates N(6)-methyladenosine (m6A) RNA, the most prevalent internal modification of messenger RNA (mRNA) in higher eukaryotes. Demethylates RNA by oxidative demethylation, which requires molecular oxygen, alpha-ketoglutarate and iron. Demethylation of m6A mRNA affects mRNA processing, translation and export. The polypeptide is RNA demethylase ALKBH5 (alkbh5) (Xenopus laevis (African clawed frog)).